We begin with the raw amino-acid sequence, 152 residues long: Protein-export protein SecB (152 aa).

The protein belongs to the SecB family. As to quaternary structure, homotetramer, a dimer of dimers. One homotetramer interacts with 1 SecA dimer.

The protein resides in the cytoplasm. One of the proteins required for the normal export of preproteins out of the cell cytoplasm. It is a molecular chaperone that binds to a subset of precursor proteins, maintaining them in a translocation-competent state. It also specifically binds to its receptor SecA. The chain is Protein-export protein SecB from Rickettsia felis (strain ATCC VR-1525 / URRWXCal2) (Rickettsia azadi).